Consider the following 164-residue polypeptide: Protein 4 (164 aa).

The sequence is that of Protein 4 from Lettuce big-vein associated virus (isolate Japan/Kagawa) (LBVaV).